Reading from the N-terminus, the 383-residue chain is Ribosomal RNA large subunit methyltransferase G (383 aa).

This sequence belongs to the methyltransferase superfamily. RlmG family.

The protein localises to the cytoplasm. The enzyme catalyses guanosine(1835) in 23S rRNA + S-adenosyl-L-methionine = N(2)-methylguanosine(1835) in 23S rRNA + S-adenosyl-L-homocysteine + H(+). Functionally, specifically methylates the guanine in position 1835 (m2G1835) of 23S rRNA. The protein is Ribosomal RNA large subunit methyltransferase G of Shewanella amazonensis (strain ATCC BAA-1098 / SB2B).